The primary structure comprises 447 residues: Argininosuccinate synthase (447 aa).

Residues 20 to 28 and Ala-46 each bind ATP; that span reads AFSGGLDTS. Tyr-102 is a binding site for L-citrulline. ATP-binding residues include Gly-132 and Thr-134. Residues Thr-134, Asn-138, and Asp-139 each contribute to the L-aspartate site. Residue Asn-138 coordinates L-citrulline. Asp-139 is an ATP binding site. Arg-142 and Ser-195 together coordinate L-citrulline. Residue Asp-197 coordinates ATP. The L-citrulline site is built by Thr-204, Glu-206, and Glu-283.

This sequence belongs to the argininosuccinate synthase family. Type 2 subfamily. As to quaternary structure, homotetramer.

The protein localises to the cytoplasm. It catalyses the reaction L-citrulline + L-aspartate + ATP = 2-(N(omega)-L-arginino)succinate + AMP + diphosphate + H(+). It functions in the pathway amino-acid biosynthesis; L-arginine biosynthesis; L-arginine from L-ornithine and carbamoyl phosphate: step 2/3. This Neisseria gonorrhoeae (strain ATCC 700825 / FA 1090) protein is Argininosuccinate synthase.